A 757-amino-acid polypeptide reads, in one-letter code: Protein Lines homolog 1 (757 aa).

A Phosphoserine modification is found at S635.

Belongs to the protein lines family. In terms of tissue distribution, expressed in adult testis, prostate, prostate, spleen, thymus, skeletal muscle, fetal kidney and brain.

This chain is Protein Lines homolog 1, found in Homo sapiens (Human).